A 415-amino-acid polypeptide reads, in one-letter code: Gamma-glutamyl phosphate reductase (415 aa).

Belongs to the gamma-glutamyl phosphate reductase family.

It is found in the cytoplasm. The catalysed reaction is L-glutamate 5-semialdehyde + phosphate + NADP(+) = L-glutamyl 5-phosphate + NADPH + H(+). It participates in amino-acid biosynthesis; L-proline biosynthesis; L-glutamate 5-semialdehyde from L-glutamate: step 2/2. Its function is as follows. Catalyzes the NADPH-dependent reduction of L-glutamate 5-phosphate into L-glutamate 5-semialdehyde and phosphate. The product spontaneously undergoes cyclization to form 1-pyrroline-5-carboxylate. The protein is Gamma-glutamyl phosphate reductase of Clostridium perfringens (strain ATCC 13124 / DSM 756 / JCM 1290 / NCIMB 6125 / NCTC 8237 / Type A).